Reading from the N-terminus, the 226-residue chain is Ribosomal RNA large subunit methyltransferase E (226 aa).

The disordered stretch occupies residues 1–25; the sequence is MVKPPAGGNEGGRGKPARLKTAYGR. Positions 82, 84, 100, 116, and 140 each coordinate S-adenosyl-L-methionine. Lys180 acts as the Proton acceptor in catalysis.

This sequence belongs to the class I-like SAM-binding methyltransferase superfamily. RNA methyltransferase RlmE family.

The protein resides in the cytoplasm. It carries out the reaction uridine(2552) in 23S rRNA + S-adenosyl-L-methionine = 2'-O-methyluridine(2552) in 23S rRNA + S-adenosyl-L-homocysteine + H(+). Functionally, specifically methylates the uridine in position 2552 of 23S rRNA at the 2'-O position of the ribose in the fully assembled 50S ribosomal subunit. This Caulobacter vibrioides (strain ATCC 19089 / CIP 103742 / CB 15) (Caulobacter crescentus) protein is Ribosomal RNA large subunit methyltransferase E.